Here is a 391-residue protein sequence, read N- to C-terminus: Thioredoxin-interacting protein (391 aa).

Lys212 is covalently cross-linked (Glycyl lysine isopeptide (Lys-Gly) (interchain with G-Cter in ubiquitin)). Ser361 carries the phosphoserine modification.

This sequence belongs to the arrestin family. Homodimer; disulfide-linked. Interacts with TXN/thioredoxin through its redox-active site. Interacts with transcriptional repressors ZBTB16, ZBTB32 and HDAC1. Interacts with DDIT4. Ubiquitinated; undergoes heterotypic 'Lys-48'-/'Lys-63'-branched polyubiquitination catalyzed by ITCH and UBR5 resulting in proteasomal degradation. Deubiquitinated by USP5, leading to TXNIP stabilization.

It is found in the cytoplasm. Functionally, may act as an oxidative stress mediator by inhibiting thioredoxin activity or by limiting its bioavailability. Interacts with COPS5 and restores COPS5-induced suppression of CDKN1B stability, blocking the COPS5-mediated translocation of CDKN1B from the nucleus to the cytoplasm. Functions as a transcriptional repressor, possibly by acting as a bridge molecule between transcription factors and corepressor complexes, and over-expression will induce G0/G1 cell cycle arrest. Required for the maturation of natural killer cells. Acts as a suppressor of tumor cell growth. Inhibits the proteasomal degradation of DDIT4, and thereby contributes to the inhibition of the mammalian target of rapamycin complex 1 (mTORC1). The protein is Thioredoxin-interacting protein (TXNIP) of Sus scrofa (Pig).